The following is a 122-amino-acid chain: Protein FLORAL ORGAN NUMBER2 (122 aa).

The N-terminal stretch at 1–25 (MGRLFLCLVVAWCWVALLLVAPVHG) is a signal peptide. The interval 28-122 (GLPGEFSGDQ…PEHARSTGRP (95 aa)) is disordered. Positions 54–63 (KQPRGVKGTR) are enriched in basic residues. Residues 64 to 77 (RPSWSSWSSTASRS) show a composition bias toward low complexity. Residues 111–122 (RRPEHARSTGRP) show a composition bias toward basic and acidic residues.

This sequence belongs to the CLV3/ESR signal peptide family.

It is found in the secreted. Functionally, probable extracellular signal that regulates meristem maintenance. May function as a putative ligand for a receptor complex including FON1. Regulates the size of the floral meristem and the number of floral organs. This chain is Protein FLORAL ORGAN NUMBER2 (FON2), found in Oryza sativa subsp. indica (Rice).